The chain runs to 946 residues: Protein TMA108 (946 aa).

Position 2 is an N-acetylserine (Ser-2). Residue 293–297 (MAMEN) coordinates substrate. Position 330 (His-330) interacts with Zn(2+). The Proton acceptor role is filled by Glu-331. Positions 334 and 353 each coordinate Zn(2+).

The protein belongs to the peptidase M1 family. As to quaternary structure, associates with ribosomal complexes. Zn(2+) serves as cofactor.

It localises to the cytoplasm. Its function is as follows. Putative zinc aminopeptidase which may be involved in ribosome biogenesis. This Saccharomyces cerevisiae (strain ATCC 204508 / S288c) (Baker's yeast) protein is Protein TMA108 (TMA108).